We begin with the raw amino-acid sequence, 613 residues long: Ribosome-associated molecular chaperone SSB2 (613 aa).

An N-acetylalanine modification is found at Ala-2. The interval 2-391 (AEGVFQGAIG…ILTGQSTSDE (390 aa)) is nucleotide binding domain (NBD). 16 to 18 (TTY) is a binding site for ATP. Phosphothreonine is present on Thr-47. ATP is bound by residues Lys-73, 205 to 207 (GGT), 271 to 278 (ERAKRTLS), and Gly-342. The segment at 392–402 (TKDLLLLDVAP) is inter-domain linker. Positions 403–613 (LSLGVGMQGD…RVVTKAMSSR (211 aa)) are substrate binding domain (SBD). The Contributes to ribosome binding signature appears at 428-430 (KRR). Thr-431 carries the post-translational modification Phosphothreonine. A lid domain (SBDalpha) region spans residues 516-612 (SEEIEKMVNQ…KRVVTKAMSS (97 aa)). The short motif at 574–582 (IEAALSDAL) is the Nuclear export signal element. A required for interaction with ribosomes region spans residues 601 to 613 (GLKRVVTKAMSSR).

The protein belongs to the heat shock protein 70 family. Ssb-type Hsp70 subfamily. In terms of assembly, binds to ribosomes. Binds close to the ribosomal tunnel exit via contacts with both ribosomal proteins RPL35, RPL39 and RPL19, and rRNA. Directly interacts with nascent polypeptides. This interaction is dependent on the ribosome-associated complex (RAC). Interacts with SSE1.

The protein resides in the cytoplasm. It carries out the reaction ATP + H2O = ADP + phosphate + H(+). In terms of biological role, ribosome-bound, Hsp70-type chaperone that assists in the cotranslational folding of newly synthesized proteins in the cytosol. Stimulates folding by interacting with nascent chains, binding to short, largely hydrophobic sequences exposed by unfolded proteins, thereby stabilizing longer, more slowly translated, and aggregation-prone nascent polypeptides and domains that cannot fold stably until fully synthesized. The Hsp70-protein substrate interaction depends on ATP-binding and on allosteric regulation between the NBD and the SBD. The ATP-bound state is characterized by a fast exchange rate of substrate (low affinity state), while in the ADP-bound state exchange is much slower (high affinity state). During the Hsp70 cycle, the chaperone switches between the ATP-bound state (open conformation) and the ADP-bound state (closed conformation) by major conformational rearrangements involving mainly the lid domain. Ssb cooperates with a specific Hsp40/Hsp70 co-chaperone termed the ribosome-associated complex (RAC), which stimulates the ATPase activity of the ribosome-associated pool of Ssbs and switches it to the high affinity substrate binding state. Hsp110 chaperone SSE1 and FES1 act as nucleotide exchange factors that cause substrate release. This Saccharomyces cerevisiae (strain ATCC 204508 / S288c) (Baker's yeast) protein is Ribosome-associated molecular chaperone SSB2.